A 724-amino-acid polypeptide reads, in one-letter code: Protein-glutamine gamma-glutamyltransferase 5 (724 aa).

N-acetylalanine is present on Ala2. Catalysis depends on residues Cys283, His342, and Asp365. Positions 405, 407, 453, and 458 each coordinate Ca(2+). Polar residues-rich tracts occupy residues 473-486 (RSQG…NPFS) and 495-505 (ARSPDSPSLQP). Residues 473–505 (RSQGPHQANSNPFSSVPPRHNSARSPDSPSLQP) form a disordered region.

This sequence belongs to the transglutaminase superfamily. Transglutaminase family. Requires Ca(2+) as cofactor.

It localises to the cytoplasm. The enzyme catalyses L-glutaminyl-[protein] + L-lysyl-[protein] = [protein]-L-lysyl-N(6)-5-L-glutamyl-[protein] + NH4(+). Catalyzes the cross-linking of proteins and the conjugation of polyamines to proteins. Contributes to the formation of the cornified cell envelope of keratinocytes. In Mus musculus (Mouse), this protein is Protein-glutamine gamma-glutamyltransferase 5 (Tgm5).